A 336-amino-acid polypeptide reads, in one-letter code: Ketol-acid reductoisomerase (NADP(+)) 1 (336 aa).

Residues 2-181 (AKVYYEKDVT…GATRAGVLET (180 aa)) enclose the KARI N-terminal Rossmann domain. NADP(+) is bound by residues 25-28 (YGSQ), Arg-48, Ser-52, and 82-85 (DELQ). His-107 is a catalytic residue. Gly-133 is an NADP(+) binding site. Residues 182-327 (TFKEETETDL…RKLREMMPFV (146 aa)) form the KARI C-terminal knotted domain. Mg(2+)-binding residues include Asp-190, Glu-194, Glu-226, and Glu-230. A substrate-binding site is contributed by Ser-251.

Belongs to the ketol-acid reductoisomerase family. Requires Mg(2+) as cofactor.

It carries out the reaction (2R)-2,3-dihydroxy-3-methylbutanoate + NADP(+) = (2S)-2-acetolactate + NADPH + H(+). It catalyses the reaction (2R,3R)-2,3-dihydroxy-3-methylpentanoate + NADP(+) = (S)-2-ethyl-2-hydroxy-3-oxobutanoate + NADPH + H(+). The protein operates within amino-acid biosynthesis; L-isoleucine biosynthesis; L-isoleucine from 2-oxobutanoate: step 2/4. It participates in amino-acid biosynthesis; L-valine biosynthesis; L-valine from pyruvate: step 2/4. Involved in the biosynthesis of branched-chain amino acids (BCAA). Catalyzes an alkyl-migration followed by a ketol-acid reduction of (S)-2-acetolactate (S2AL) to yield (R)-2,3-dihydroxy-isovalerate. In the isomerase reaction, S2AL is rearranged via a Mg-dependent methyl migration to produce 3-hydroxy-3-methyl-2-ketobutyrate (HMKB). In the reductase reaction, this 2-ketoacid undergoes a metal-dependent reduction by NADPH to yield (R)-2,3-dihydroxy-isovalerate. This chain is Ketol-acid reductoisomerase (NADP(+)) 1, found in Bacillus cereus (strain ATCC 10987 / NRS 248).